Reading from the N-terminus, the 426-residue chain is 3-phosphoshikimate 1-carboxyvinyltransferase (426 aa).

The 3-phosphoshikimate site is built by Lys-22, Ser-23, and Arg-27. Lys-22 contacts phosphoenolpyruvate. Residues Gly-96 and Arg-124 each contribute to the phosphoenolpyruvate site. Residues Ser-170, Ser-171, Gln-172, Ser-198, Asp-314, Asn-337, and Lys-341 each contribute to the 3-phosphoshikimate site. Gln-172 is a binding site for phosphoenolpyruvate. Asp-314 serves as the catalytic Proton acceptor. Residues Arg-345, Arg-387, and Lys-412 each contribute to the phosphoenolpyruvate site.

Belongs to the EPSP synthase family. In terms of assembly, monomer.

It localises to the cytoplasm. It carries out the reaction 3-phosphoshikimate + phosphoenolpyruvate = 5-O-(1-carboxyvinyl)-3-phosphoshikimate + phosphate. The protein operates within metabolic intermediate biosynthesis; chorismate biosynthesis; chorismate from D-erythrose 4-phosphate and phosphoenolpyruvate: step 6/7. Catalyzes the transfer of the enolpyruvyl moiety of phosphoenolpyruvate (PEP) to the 5-hydroxyl of shikimate-3-phosphate (S3P) to produce enolpyruvyl shikimate-3-phosphate and inorganic phosphate. The protein is 3-phosphoshikimate 1-carboxyvinyltransferase of Shewanella piezotolerans (strain WP3 / JCM 13877).